The sequence spans 425 residues: Phosphoribosylamine--glycine ligase (425 aa).

One can recognise an ATP-grasp domain in the interval 109–315 (KALMQEAGIP…LEELILACVQ (207 aa)). An ATP-binding site is contributed by 135 to 195 (IQAQGAPIVV…EECLTGQEVS (61 aa)). Mg(2+) contacts are provided by glutamate 285 and asparagine 287.

It belongs to the GARS family. Mg(2+) serves as cofactor. It depends on Mn(2+) as a cofactor.

It catalyses the reaction 5-phospho-beta-D-ribosylamine + glycine + ATP = N(1)-(5-phospho-beta-D-ribosyl)glycinamide + ADP + phosphate + H(+). The protein operates within purine metabolism; IMP biosynthesis via de novo pathway; N(1)-(5-phospho-D-ribosyl)glycinamide from 5-phospho-alpha-D-ribose 1-diphosphate: step 2/2. This is Phosphoribosylamine--glycine ligase from Nostoc sp. (strain PCC 7120 / SAG 25.82 / UTEX 2576).